We begin with the raw amino-acid sequence, 694 residues long: Nucleolin (694 aa).

The disordered stretch occupies residues 1 to 277 (MVKLAKTPKN…EAKKKKTETP (277 aa)). Positions 26–40 (ESEEEESSDLEESSG) are enriched in acidic residues. Low complexity predominate over residues 46-108 (PPKKQQKAAV…AVVGKGAKNG (63 aa)). Repeat copies occupy residues 55-61 (VTPAKKA), 62-68 (ATPAKKA), 69-75 (ATPAKKA), 76-82 (VTPAKKA), and 84-90 (ATPAKKA). Residues 55–90 (VTPAKKAATPAKKAATPAKKAVTPAKKAVATPAKKA) form a 5 X 7 AA tandem repeats of X-T-P-X-K-K-X region. Serine 116 and serine 136 each carry phosphoserine. The span at 116–142 (SEEEDEDDEDDEEDEDEEEESDEEEEP) shows a compositional bias: acidic residues. Low complexity predominate over residues 143–168 (AVPVKPAAKKSAAAVPAKKPAVVPAK). Serine 171 carries the phosphoserine modification. Acidic residues predominate over residues 171–194 (SEEEEEEDDEEEDEEDDESEDEAM). Positions 196-213 (TTPAPVKKPTPAKATPAK) are enriched in low complexity. The segment covering 218–246 (SEDEEDEEDEDEDEEDEDDEEEDEEESED) has biased composition (acidic residues). RRM domains lie at 281–357 (FSLF…KAKS), 371–445 (RTLF…YTGE), 461–535 (KTLI…FSSP), and 553–628 (KTLF…FAKP). A disordered region spans residues 631 to 694 (EFQRGGGFGG…KPQGKKIKFE (64 aa)). A compositionally biased stretch (gly residues) spans 633–680 (QRGGGFGGGFGGRGGRGGRGGGRGGFGGRGGGRGFGGRGGGFRGGRGG). Basic and acidic residues predominate over residues 681-694 (GGDHKPQGKKIKFE).

Post-translationally, highly phosphorylated during mitosis.

Its subcellular location is the nucleus. It is found in the nucleolus. Nucleolin is the major nucleolar protein of growing eukaryotic cells. It is found associated with intranucleolar chromatin and pre-ribosomal particles. It induces chromatin decondensation by binding to histone H1. It is thought to play a role in pre-rRNA transcription and ribosome assembly. This is Nucleolin (NCL) from Gallus gallus (Chicken).